The sequence spans 179 residues: Transcription factor 21 (179 aa).

The disordered stretch occupies residues 20–86 (CDGIKLDPNK…KQVQRNAANA (67 aa)). Over residues 34-46 (SNDSNEESSTCDN) the composition is skewed to polar residues. Positions 50–64 (KKGRGTSGKRRKASS) are enriched in basic residues. The segment covering 70 to 80 (GTINQEGKQVQ) has biased composition (polar residues). Positions 79–131 (VQRNAANARERARMRVLSKAFSRLKTTLPWVPPDTKLSKLDTLRLASSYIAHL) constitute a bHLH domain.

As to quaternary structure, efficient DNA binding requires dimerization with another bHLH protein. In terms of tissue distribution, at the start of neurulation (stage 13), expressed in the pronephros. At tailbud stage (stage 25-28), expression is high in the anterior-most branchial arch and pronephric glomus. At stage 40, staining persists in the glomus and in the epicardium region of the heart, and at stage 42, expression is higher in the glomus than in the kidney tubule or duct. In adults, expression is highest in the rectum and the spleen, with significant expression in the duodenum, heart, kidney, lungs, pancreas, skin, liver and muscle.

The protein resides in the nucleus. Involved in epithelial-mesenchymal interactions in kidney and lung morphogenesis that include epithelial differentiation and branching morphogenesis. The protein is Transcription factor 21 (tcf21) of Xenopus laevis (African clawed frog).